The chain runs to 338 residues: Ribonucleoside-diphosphate reductase small subunit (338 aa).

Positions 81, 112, and 115 each coordinate Fe cation. Residue Tyr-119 is part of the active site. Fe cation-binding residues include Glu-174, Glu-208, and His-211.

It belongs to the ribonucleoside diphosphate reductase small chain family. In terms of assembly, heterodimer of a large and a small subunit. Fe cation serves as cofactor.

Its subcellular location is the cytoplasm. It carries out the reaction a 2'-deoxyribonucleoside 5'-diphosphate + [thioredoxin]-disulfide + H2O = a ribonucleoside 5'-diphosphate + [thioredoxin]-dithiol. In terms of biological role, provides the precursors necessary for DNA synthesis. Catalyzes the biosynthesis of deoxyribonucleotides from the corresponding ribonucleotides. The chain is Ribonucleoside-diphosphate reductase small subunit (rnrB-1) from Dictyostelium discoideum (Social amoeba).